The chain runs to 463 residues: Cytoplasmic tRNA 2-thiolation protein 2 (463 aa).

The protein belongs to the CTU2/NCS2 family.

It localises to the cytoplasm. The protein operates within tRNA modification; 5-methoxycarbonylmethyl-2-thiouridine-tRNA biosynthesis. Its function is as follows. Plays a central role in 2-thiolation of mcm(5)S(2)U at tRNA wobble positions of tRNA(Lys), tRNA(Glu) and tRNA(Gln). May act by forming a heterodimer with NCS6 that ligates sulfur from thiocarboxylated URM1 onto the uridine of tRNAs at wobble position. Prior mcm(5) tRNA modification by the elongator complex is required for 2-thiolation. May also be involved in protein urmylation. The sequence is that of Cytoplasmic tRNA 2-thiolation protein 2 from Kluyveromyces lactis (strain ATCC 8585 / CBS 2359 / DSM 70799 / NBRC 1267 / NRRL Y-1140 / WM37) (Yeast).